The following is a 385-amino-acid chain: Cell division protein FtsZ (385 aa).

GTP is bound by residues 37 to 41 (GGGSN), 125 to 127 (GTG), Glu156, Lys160, and Asp204.

This sequence belongs to the FtsZ family. In terms of assembly, homodimer. Polymerizes to form a dynamic ring structure in a strictly GTP-dependent manner. Interacts directly with several other division proteins.

It is found in the cytoplasm. Functionally, essential cell division protein that forms a contractile ring structure (Z ring) at the future cell division site. The regulation of the ring assembly controls the timing and the location of cell division. One of the functions of the FtsZ ring is to recruit other cell division proteins to the septum to produce a new cell wall between the dividing cells. Binds GTP and shows GTPase activity. The chain is Cell division protein FtsZ from Helicobacter pylori (strain ATCC 700392 / 26695) (Campylobacter pylori).